Consider the following 487-residue polypeptide: Solute carrier family 22 member 15-like (487 aa).

Residues 23 to 43 form a helical membrane-spanning segment; sequence FLTLLQIYVACQSMLIVLVGA. N70 carries an N-linked (GlcNAc...) asparagine glycan. 11 consecutive transmembrane segments (helical) span residues 90–110, 117–137, 141–161, 178–198, 203–223, 286–306, 315–335, 345–365, 374–394, 408–428, and 435–455; these read LASSLFFAGLLIGNVFFGPLS, PVYLSGLFFDIIFGYFTALAP, VFAVSRFFVGVMNGGMALVSF, SLTNLIFAVGIAFYALLGFYI, TLAFVANSPGIFFLLLSFVLP, ILLMYIWYVCSLVYYGLTLNA, LNVALYGLVEVPAFPLCLYFI, ATAGFLVFAGFACIFTIFVPE, TVLALFGKLSVSAAFNVVYIY, LGVCAMACRFGGILSPFIPAM, and MPFVAFGISGISAGILSLLLP.

The protein belongs to the major facilitator (TC 2.A.1) superfamily. Organic cation transporter (TC 2.A.1.19) family.

The protein localises to the membrane. Its function is as follows. Probably transports organic cations. The polypeptide is Solute carrier family 22 member 15-like (slc22a15b) (Xenopus laevis (African clawed frog)).